The following is a 424-amino-acid chain: L-glutamine:2-deoxy-scyllo-inosose aminotransferase (424 aa).

N6-(pyridoxal phosphate)lysine is present on K202.

This sequence belongs to the DegT/DnrJ/EryC1 family. L-glutamine:2-deoxy-scyllo-inosose/scyllo-inosose aminotransferase subfamily. The cofactor is pyridoxal 5'-phosphate.

It carries out the reaction 2-deoxy-L-scyllo-inosose + L-glutamine = 2-deoxy-scyllo-inosamine + 2-oxoglutaramate. It catalyses the reaction 3-amino-2,3-dideoxy-scyllo-inosose + L-glutamine = 2-deoxystreptamine + 2-oxoglutaramate. It functions in the pathway metabolic intermediate biosynthesis; 2-deoxystreptamine biosynthesis; 2-deoxystreptamine from D-glucose 6-phosphate: step 2/4. It participates in metabolic intermediate biosynthesis; 2-deoxystreptamine biosynthesis; 2-deoxystreptamine from D-glucose 6-phosphate: step 4/4. Its pathway is antibiotic biosynthesis; paromomycin biosynthesis. In terms of biological role, catalyzes the PLP-dependent transamination of 2-deoxy-scyllo-inosose (2-DOI) to form 2-deoxy-scyllo-inosamine (2-DOIA) using L-glutamine as the amino donor. Also catalyzes the transamination of 3-amino-2,3-dideoxy-scyllo-inosose (keto-2-DOIA) into 2-deoxystreptamine (2-DOS). This is L-glutamine:2-deoxy-scyllo-inosose aminotransferase (parS) from Streptomyces paromomycinus (Streptomyces rimosus subsp. paromomycinus).